A 428-amino-acid chain; its full sequence is Glutamate-1-semialdehyde 2,1-aminomutase (428 aa).

At Lys265 the chain carries N6-(pyridoxal phosphate)lysine.

This sequence belongs to the class-III pyridoxal-phosphate-dependent aminotransferase family. HemL subfamily. Homodimer. Pyridoxal 5'-phosphate is required as a cofactor.

Its subcellular location is the cytoplasm. The enzyme catalyses (S)-4-amino-5-oxopentanoate = 5-aminolevulinate. The protein operates within porphyrin-containing compound metabolism; protoporphyrin-IX biosynthesis; 5-aminolevulinate from L-glutamyl-tRNA(Glu): step 2/2. This chain is Glutamate-1-semialdehyde 2,1-aminomutase, found in Thioalkalivibrio sulfidiphilus (strain HL-EbGR7).